We begin with the raw amino-acid sequence, 316 residues long: Pantothenate kinase (316 aa).

95–102 (GSVAVGKS) contacts ATP.

This sequence belongs to the prokaryotic pantothenate kinase family.

It localises to the cytoplasm. It catalyses the reaction (R)-pantothenate + ATP = (R)-4'-phosphopantothenate + ADP + H(+). It functions in the pathway cofactor biosynthesis; coenzyme A biosynthesis; CoA from (R)-pantothenate: step 1/5. The polypeptide is Pantothenate kinase (Cronobacter sakazakii (strain ATCC BAA-894) (Enterobacter sakazakii)).